Here is a 320-residue protein sequence, read N- to C-terminus: Very-long-chain 3-oxoacyl-CoA reductase (320 aa).

A helical transmembrane segment spans residues 17-37; it reads FWYLGVVAAVWWGLRAAWCLL. Position 56–85 (56–85) interacts with NADP(+); it reads GKWAVVTGATDGIGKAYAEELAKRGMNIVL. Transmembrane regions (helical) follow at residues 189–209 and 283–303; these read GVIL…LTVY and AIMG…SLGM. Residue Ser196 coordinates substrate. The active-site Proton acceptor is Tyr209.

Belongs to the short-chain dehydrogenases/reductases (SDR) family. 17-beta-HSD 3 subfamily.

The protein localises to the endoplasmic reticulum membrane. It carries out the reaction a very-long-chain (3R)-3-hydroxyacyl-CoA + NADP(+) = a very-long-chain 3-oxoacyl-CoA + NADPH + H(+). The catalysed reaction is 17beta-estradiol + NAD(+) = estrone + NADH + H(+). It catalyses the reaction 17beta-estradiol + NADP(+) = estrone + NADPH + H(+). The enzyme catalyses 3-oxooctadecanoyl-CoA + NADPH + H(+) = (3R)-hydroxyoctadecanoyl-CoA + NADP(+). It carries out the reaction (7Z,10Z,13Z,16Z)-3-oxodocosatetraenoyl-CoA + NADPH + H(+) = (3R)-hydroxy-(7Z,10Z,13Z,16Z)-docosatetraenoyl-CoA + NADP(+). The catalysed reaction is 3-oxo-(7Z,10Z,13Z,16Z,19Z)-docosapentaenoyl-CoA + NADPH + H(+) = (3R)-hydroxy-(7Z,10Z,13Z,16Z,19Z)-docosapentaenoyl-CoA + NADP(+). It catalyses the reaction (8Z,11Z,14Z)-3-oxoeicosatrienoyl-CoA + NADPH + H(+) = (3R)-hydroxy-(8Z,11Z,14Z)-eicosatrienoyl-CoA + NADP(+). It participates in lipid metabolism; fatty acid biosynthesis. Its pathway is steroid biosynthesis; estrogen biosynthesis. Functionally, catalyzes the second of the four reactions of the long-chain fatty acids elongation cycle. This endoplasmic reticulum-bound enzymatic process, allows the addition of two carbons to the chain of long- and very long-chain fatty acids/VLCFAs per cycle. This enzyme has a 3-ketoacyl-CoA reductase activity, reducing 3-ketoacyl-CoA to 3-hydroxyacyl-CoA, within each cycle of fatty acid elongation. Thereby, it may participate in the production of VLCFAs of different chain lengths that are involved in multiple biological processes as precursors of membrane lipids and lipid mediators. May also catalyze the transformation of estrone (E1) into estradiol (E2) and play a role in estrogen formation. In Xenopus tropicalis (Western clawed frog), this protein is Very-long-chain 3-oxoacyl-CoA reductase (hsd17b12).